The chain runs to 759 residues: GTPase-activating protein rrc-1 (759 aa).

One can recognise an SH3 domain in the interval proline 164–aspartate 243. The Rho-GAP domain occupies leucine 280–phenylalanine 473. The segment at alanine 591–glutamate 624 is disordered. The span at serine 612–leucine 622 shows a compositional bias: polar residues.

As to expression, expressed in coelomocytes, excretory cells, uterine-seam cells and GLR cells.

Functions as a GTPase-activating protein (GAP) for ced-10/rac-1 and CDC42. In Caenorhabditis elegans, this protein is GTPase-activating protein rrc-1 (rrc-1).